The chain runs to 919 residues: Tight junction protein ZO-3 (919 aa).

Residues 11–93 enclose the PDZ 1 domain; sequence TATLSKDPRR…MANITVKRPR (83 aa). The tract at residues 92–173 is disordered; sequence PRRIHLPATK…SPGGGSEANG (82 aa). Phosphoserine is present on Ser-112. Positions 117 to 131 are enriched in basic and acidic residues; the sequence is GPQRVEEVDQGRGYD. A Phosphoserine modification is found at Ser-136. Residues 147–163 show a composition bias toward basic residues; that stretch reads RRPRPGRRGRAGSHGRR. 4 positions are modified to phosphoserine: Ser-164, Ser-169, Ser-203, and Ser-319. One can recognise a PDZ 2 domain in the interval 195 to 272; the sequence is SVLVKRRDSE…KLSLLVLRDR (78 aa). The interval 279–377 is disordered; it reads IPPAVSDSDS…SSQSMEDRGY (99 aa). Thr-325 carries the post-translational modification Phosphothreonine. Ser-327 is modified (phosphoserine). Residues 332–360 are compositionally biased toward basic and acidic residues; it reads PRLRRESSVDSRTISEPDEQRSELPRESS. Ser-371 carries the post-translational modification Phosphoserine. The PDZ 3 domain occupies 380–446; it reads DTRVVRFLKG…LTREEAVQFL (67 aa). Residues 475-549 enclose the SH3 domain; it reads GDSFYIRTHF…PNQSRAEQLA (75 aa). The Guanylate kinase-like domain occupies 580-761; the sequence is LRRGAKKTTQ…WYQELKAIIR (182 aa). Ser-591 carries the post-translational modification Phosphoserine. The span at 791–801 shows a compositional bias: low complexity; that stretch reads ADSSADLSCDS. Disordered regions lie at residues 791-886 and 899-919; these read ADSS…DSMR and RVHD…ATDL. The span at 812–828 shows a compositional bias: gly residues; sequence EGGAYTDGEGYTDGEGG. A phosphoserine mark is found at Ser-856, Ser-905, and Ser-906.

Belongs to the MAGUK family. In terms of assembly, interacts with occludin OCLN, claudins and TPJ1. Interacts with PATJ. Interacts with UBN1. Interacts with FASLG. Interacts with CCND1. Post-translationally, phosphorylated.

Its subcellular location is the cell membrane. The protein resides in the cell junction. It localises to the tight junction. It is found in the nucleus. In terms of biological role, TJP1, TJP2, and TJP3 are closely related scaffolding proteins that link tight junction (TJ) transmembrane proteins such as claudins, junctional adhesion molecules, and occludin to the actin cytoskeleton. The tight junction acts to limit movement of substances through the paracellular space and as a boundary between the compositionally distinct apical and basolateral plasma membrane domains of epithelial and endothelial cells. Binds and recruits PATJ to tight junctions where it connects and stabilizes apical and lateral components of tight junctions. Promotes cell-cycle progression through the sequestration of cyclin D1 (CCND1) at tight junctions during mitosis which prevents CCND1 degradation during M-phase and enables S-phase transition. With TJP1 and TJP2, participates in the junctional retention and stability of the transcription factor DBPA, but is not involved in its shuttling to the nucleus. Contrary to TJP2, TJP3 is dispensable for individual viability, embryonic development, epithelial differentiation, and the establishment of TJs, at least in the laboratory environment. In Homo sapiens (Human), this protein is Tight junction protein ZO-3 (TJP3).